A 439-amino-acid chain; its full sequence is C4-dicarboxylate transport protein (439 aa).

Helical transmembrane passes span 9-29 (HLYFQVLTAISIGVAVGYYMP), 45-65 (MIKMIITPIIFCTVVTGIAGM), 80-100 (LYFEAVSTLALAIGLMVINVI), 150-170 (GEILQVLFFAILFGLALSAMG), 186-206 (AFFGVVNIIMKFAPIGAFGAM), 221-241 (LGMLMGSFYLTCLLFIFVVLG), 291-311 (VVGLVIPTGYSFNLDGTSIYL), 334-354 (ILGVLMLTSKGAAGVTGSGFV), and 357-377 (AATFAAIPTIPVAGLALILGI).

The protein belongs to the dicarboxylate/amino acid:cation symporter (DAACS) (TC 2.A.23) family.

Its subcellular location is the cell inner membrane. Its function is as follows. Responsible for the transport of dicarboxylates such as succinate, fumarate, and malate from the periplasm across the membrane. In Citrifermentans bemidjiense (strain ATCC BAA-1014 / DSM 16622 / JCM 12645 / Bem) (Geobacter bemidjiensis), this protein is C4-dicarboxylate transport protein.